The following is a 484-amino-acid chain: Sulfoacetaldehyde dehydrogenase (484 aa).

NAD(+) is bound by residues 105–110 (LTPVTN), G188, and G206. The active-site Nucleophile is C239. Positions 332 and 412 each coordinate NAD(+).

This sequence belongs to the aldehyde dehydrogenase family.

The enzyme catalyses sulfoacetaldehyde + NAD(+) + CoA = sulfoacetyl-CoA + NADH + H(+). Functionally, part of a variant of the sulfo-TK pathway, a D-sulfoquinovose degradation pathway that produces sulfoacetate. Catalyzes the oxidation of sulfoacetaldehyde (SA) to sulfoacetyl-coenzyme A (sulfoacetyl-CoA). Is highly specific for NAD(+), with only residual (1%) activity with NADP(+). Cannot use acetaldehyde. This Acholeplasma sp protein is Sulfoacetaldehyde dehydrogenase.